The chain runs to 287 residues: MDLEVVVITGMSGSGKSVALHALEDAGYYCVDNLPPELLTSFVELEHAHHGHRVAVAMDVRSATALPLVPQQLAGLREQGVQVRQLFLDATDDVLVRRFSETRRRHPLSQAEMREGPRPLLHTMRLERELLAPLREQAHVIDTSTLRSAQLLSYVKDLLSVPPSRLTLVFQSFAFKRGISMDADYVFDVRMLPNPHYEPLLRALTGKDAPVIDYLRQQPEVALMLAHIGDFLDHWLDALAHNHRSYVTVAIGCTGGQHRSVYLVEQLAARFEGRWNTLRRHRELDGI.

10-17 is a binding site for ATP; that stretch reads GMSGSGKS. Residue 59 to 62 coordinates GTP; sequence DVRS.

Belongs to the RapZ-like family.

Displays ATPase and GTPase activities. This is Nucleotide-binding protein Ajs_0902 from Acidovorax sp. (strain JS42).